A 333-amino-acid chain; its full sequence is Sphingomyelinase C (333 aa).

The signal sequence occupies residues 1–27; that stretch reads MKGKLLKGVLSLGVGLGALYSGTSAQA. A disulfide bond links cysteine 150 and cysteine 186.

Belongs to the neutral sphingomyelinase family. Mg(2+) is required as a cofactor.

It is found in the secreted. It catalyses the reaction a sphingomyelin + H2O = phosphocholine + an N-acylsphing-4-enine + H(+). Activated by cobalt and manganese ions. Functionally, required, with sphingomyelinase, to effect target cell lysis (hemolysis). The chain is Sphingomyelinase C (sph) from Bacillus cereus.